A 219-amino-acid polypeptide reads, in one-letter code: 3-demethoxyubiquinol 3-hydroxylase (219 aa).

The interval 21–51 is disordered; sequence RTLTPGTTQAERTPAHAAPAPDAPEAGTLPS. Residues 35 to 46 show a composition bias toward low complexity; that stretch reads AHAAPAPDAPEA. 6 residues coordinate Fe cation: glutamate 68, glutamate 98, histidine 101, glutamate 150, glutamate 182, and histidine 185.

This sequence belongs to the COQ7 family. The cofactor is Fe cation.

Its subcellular location is the cell membrane. The enzyme catalyses a 5-methoxy-2-methyl-3-(all-trans-polyprenyl)benzene-1,4-diol + AH2 + O2 = a 3-demethylubiquinol + A + H2O. It participates in cofactor biosynthesis; ubiquinone biosynthesis. Functionally, catalyzes the hydroxylation of 2-nonaprenyl-3-methyl-6-methoxy-1,4-benzoquinol during ubiquinone biosynthesis. This Alcanivorax borkumensis (strain ATCC 700651 / DSM 11573 / NCIMB 13689 / SK2) protein is 3-demethoxyubiquinol 3-hydroxylase.